Reading from the N-terminus, the 67-residue chain is Photosystem II reaction center protein H (67 aa).

Residues 27-47 (GAVPVMAFVGVLLLVFLVILL) form a helical membrane-spanning segment.

It belongs to the PsbH family. PSII is composed of 1 copy each of membrane proteins PsbA, PsbB, PsbC, PsbD, PsbE, PsbF, PsbH, PsbI, PsbJ, PsbK, PsbL, PsbM, PsbT, PsbX, PsbY, Psb30/Ycf12, peripheral proteins PsbO, CyanoQ (PsbQ), PsbU, PsbV and a large number of cofactors. It forms dimeric complexes.

The protein localises to the cellular thylakoid membrane. Functionally, one of the components of the core complex of photosystem II (PSII), required for its stability and/or assembly. PSII is a light-driven water:plastoquinone oxidoreductase that uses light energy to abstract electrons from H(2)O, generating O(2) and a proton gradient subsequently used for ATP formation. It consists of a core antenna complex that captures photons, and an electron transfer chain that converts photonic excitation into a charge separation. The polypeptide is Photosystem II reaction center protein H (Prochlorococcus marinus (strain SARG / CCMP1375 / SS120)).